We begin with the raw amino-acid sequence, 877 residues long: Leucine--tRNA ligase (877 aa).

Positions 50–60 (PYPSGKLHMGH) match the 'HIGH' region motif. The 'KMSKS' region motif lies at 634–638 (KMSKS). An ATP-binding site is contributed by lysine 637.

This sequence belongs to the class-I aminoacyl-tRNA synthetase family.

It localises to the cytoplasm. It catalyses the reaction tRNA(Leu) + L-leucine + ATP = L-leucyl-tRNA(Leu) + AMP + diphosphate. The polypeptide is Leucine--tRNA ligase (Hydrogenovibrio crunogenus (strain DSM 25203 / XCL-2) (Thiomicrospira crunogena)).